The chain runs to 398 residues: Phosphoglycerate kinase (398 aa).

Substrate contacts are provided by residues aspartate 21–asparagine 23, arginine 36, histidine 59–arginine 62, arginine 119, and arginine 157. Residues lysine 208, glycine 296, glutamate 327, and glycine 354–serine 357 contribute to the ATP site.

This sequence belongs to the phosphoglycerate kinase family. As to quaternary structure, monomer.

The protein resides in the cytoplasm. It carries out the reaction (2R)-3-phosphoglycerate + ATP = (2R)-3-phospho-glyceroyl phosphate + ADP. It participates in carbohydrate degradation; glycolysis; pyruvate from D-glyceraldehyde 3-phosphate: step 2/5. In Streptococcus pyogenes serotype M1, this protein is Phosphoglycerate kinase (pgk).